An 868-amino-acid polypeptide reads, in one-letter code: DNA mismatch repair protein MutS (868 aa).

621-628 (GPNMGGKS) lines the ATP pocket. Residues 803 to 852 (LESGDGGDTGSAQLPLFGPEPVFPPPAQPEPEPDPIREAVENLDPDGLTP) are disordered. Pro residues predominate over residues 823–832 (PVFPPPAQPE).

Belongs to the DNA mismatch repair MutS family.

In terms of biological role, this protein is involved in the repair of mismatches in DNA. It is possible that it carries out the mismatch recognition step. This protein has a weak ATPase activity. This is DNA mismatch repair protein MutS from Halorhodospira halophila (strain DSM 244 / SL1) (Ectothiorhodospira halophila (strain DSM 244 / SL1)).